Here is a 428-residue protein sequence, read N- to C-terminus: Glutamate-1-semialdehyde 2,1-aminomutase 1 (428 aa).

At K267 the chain carries N6-(pyridoxal phosphate)lysine.

The protein belongs to the class-III pyridoxal-phosphate-dependent aminotransferase family. HemL subfamily. As to quaternary structure, homodimer. The cofactor is pyridoxal 5'-phosphate.

Its subcellular location is the cytoplasm. It catalyses the reaction (S)-4-amino-5-oxopentanoate = 5-aminolevulinate. The protein operates within porphyrin-containing compound metabolism; protoporphyrin-IX biosynthesis; 5-aminolevulinate from L-glutamyl-tRNA(Glu): step 2/2. In Staphylococcus aureus (strain Mu3 / ATCC 700698), this protein is Glutamate-1-semialdehyde 2,1-aminomutase 1.